A 452-amino-acid chain; its full sequence is Membrane-bound lytic murein transglycosylase D (452 aa).

The first 15 residues, 1-15, serve as a signal peptide directing secretion; it reads MKAKAILLASVLLVG. Residue Cys16 is the site of N-palmitoyl cysteine attachment. A lipid anchor (S-diacylglycerol cysteine) is attached at Cys16. Positions 113-198 are slt-type domain; sequence NMPMELVLLP…LLTVAAYNSG (86 aa). Residue Glu125 is part of the active site. 2 consecutive LysM domains span residues 341–384 and 400–448; these read RVYT…SLTI and ITYR…KNNN.

It belongs to the transglycosylase Slt family.

Its subcellular location is the cell membrane. The enzyme catalyses Exolytic cleavage of the (1-&gt;4)-beta-glycosidic linkage between N-acetylmuramic acid (MurNAc) and N-acetylglucosamine (GlcNAc) residues in peptidoglycan, from either the reducing or the non-reducing ends of the peptidoglycan chains, with concomitant formation of a 1,6-anhydrobond in the MurNAc residue.. Its function is as follows. Murein-degrading enzyme. May play a role in recycling of muropeptides during cell elongation and/or cell division. In Escherichia coli O6:H1 (strain CFT073 / ATCC 700928 / UPEC), this protein is Membrane-bound lytic murein transglycosylase D (mltD).